We begin with the raw amino-acid sequence, 1052 residues long: Fibroblast growth factor receptor homolog 2 (1052 aa).

Positions 1 to 19 (MAKVPITLVMIIAIVSAAA) are cleaved as a signal peptide. The Extracellular segment spans residues 20–600 (DLGCDYGHHR…EIYALLHAHP (581 aa)). Ig-like C2-type domains are found at residues 23–117 (CDYG…IASF), 124–230 (PALP…PTQL), and 240–340 (PMLK…RTVA). Residues C30 and C90 are joined by a disulfide bond. 6 N-linked (GlcNAc...) asparagine glycosylation sites follow: N99, N137, N175, N181, N249, and N257. A disulfide bridge connects residues C164 and C217. Cysteines 262 and 329 form a disulfide. Residues 358-372 (TTTTTVASPIPTAST) are compositionally biased toward low complexity. Residues 358–393 (TTTTTVASPIPTASTGEDNDDDVENPAAEASGGVGP) are disordered. 2 consecutive Ig-like C2-type domains span residues 393–478 (PPVF…FSVQ) and 487–585 (PIIV…RVVS). A disulfide bridge connects residues C416 and C462. N-linked (GlcNAc...) asparagine glycans are attached at residues N423, N444, N494, N500, N526, N541, N546, N555, and N576. C507 and C566 form a disulfide bridge. Residues 601-626 (LGFTLAAITIVALFLLGSAFITFMLR) traverse the membrane as a helical segment. Residues 627–1052 (RLRREKLLKL…LRYQYTYKFN (426 aa)) are Cytoplasmic-facing. The region spanning 712-1000 (LSLGSILGEG…ELVESFDGIL (289 aa)) is the Protein kinase domain. Residues 718-726 (LGEGAFGRV) and K748 each bind ATP. Residue D864 is the Proton acceptor of the active site. The residue at position 895 (Y895) is a Phosphotyrosine; by autocatalysis. The segment at 1017–1038 (PMLETPPSSGDEDDGSDTETFR) is disordered.

Belongs to the protein kinase superfamily. Tyr protein kinase family. Fibroblast growth factor receptor subfamily. In terms of tissue distribution, during embryogenesis, expression is seen in mesoderm, endodermal precursor cells, CNS midline cells and trachea and salivary duct ectodermal cells.

Its subcellular location is the membrane. It carries out the reaction L-tyrosyl-[protein] + ATP = O-phospho-L-tyrosyl-[protein] + ADP + H(+). Its function is as follows. May be required for patterning of muscle precursor cells: generation of mesodermal and endodermal layers, invaginations of various types of cells, and CNS formation. Essential for the ability of the migrating tracheal and midline cells to recognize external guiding cues. This is Fibroblast growth factor receptor homolog 2 (btl) from Drosophila melanogaster (Fruit fly).